The sequence spans 860 residues: MTKRYFSLLAVCSAIATSTFADDTPTNSLSLGKTYLRCYPQADSNQWDCAEYSSETNLPIGRSQIQQAPNAYDFVSAENLTPAAQSALLPGCTGMYIDPLGDQTNAPSPENTPLIVEADDSVLTGSQKAQLDGNVQISQGARSIRADSMTYSRETEEASLAGGVTIRNPGLLIRGDKASMSTTRNQASFENAIFVLHGQHIRGQADAIRQTSDSSIVLEGGSITSCEPGSNAWSLGGAEIKIDNEKGQGTGKHITLKVGKVPIMYVPYIAFPLGDQRQSGLLFPSISSSDNGGLDAAVPFYWNMAPNYDATITPRIISGRGAMLEVEGRHLNKSFYTESNIAYLPNDDGGQDKDLDTLVSNGDITESQAHPYTGQNRWLGHLSQQGGSASNGGWYSTIDFTKVSDQDYFRDLGASSFSEQNQSYLDQRAELGYLFEHWTVSAMAQNRQVLLYDLDTPYRRAPQLNAIGHYSVNGFEFKLDNELVRFDHPSNEWRNGDTLITGSRLSTDYRAAWPIRGRWGFIKPEVGYKALGYQLESDGLASSAESSPTLGAAQASIDMSVIFEHRGGSIMQTIEPRVYYLHRAYTDHSDLYAVTADGQNVNFDTSIRTFSYSQLFRDSRFGGRDRLDDANQTTVGLTSRWYSNNSGRELFSASIGQVFHNADRRVGLNGEELNTGQTSELAADVSVMLGPLSRFYVNSIYDTEAAEITRASSGVYYHSQDLSTLANLSYSYVRDYRQSSIAAGTTEATDIDQVDLSFVTPINKQWSLMGRYNYDFTQAQELETFLGFEYNDCCYRVRLLARKWLDSNIASLTDNHDLEHDQGVFFEVHFKGLGGSGAKVNSILEDSIRGYQERERRNKQ.

Positions 1–21 (MTKRYFSLLAVCSAIATSTFA) are cleaved as a signal peptide.

The protein belongs to the LptD family. As to quaternary structure, component of the lipopolysaccharide transport and assembly complex. Interacts with LptE and LptA.

The protein localises to the cell outer membrane. Together with LptE, is involved in the assembly of lipopolysaccharide (LPS) at the surface of the outer membrane. The polypeptide is LPS-assembly protein LptD (Saccharophagus degradans (strain 2-40 / ATCC 43961 / DSM 17024)).